Consider the following 283-residue polypeptide: Orotidine 5'-phosphate decarboxylase (283 aa).

The Proton donor role is filled by Lys-97.

It belongs to the OMP decarboxylase family. Type 2 subfamily.

The catalysed reaction is orotidine 5'-phosphate + H(+) = UMP + CO2. The protein operates within pyrimidine metabolism; UMP biosynthesis via de novo pathway; UMP from orotate: step 2/2. This is Orotidine 5'-phosphate decarboxylase from Clostridium botulinum (strain Loch Maree / Type A3).